Reading from the N-terminus, the 185-residue chain is HTH-type transcriptional regulator Hpr (185 aa).

Residues 13-157 (AMIFSQRIAQ…LIAILRNIYG (145 aa)) form the HTH marR-type domain. Positions 63–86 (ISEIAKFGVMHVSTAFNFSKKLEE) form a DNA-binding region, H-T-H motif.

As to quaternary structure, homodimer.

In terms of biological role, negative regulator of protease production and sporulation. In Bacillus mycoides (strain KBAB4) (Bacillus weihenstephanensis), this protein is HTH-type transcriptional regulator Hpr.